Reading from the N-terminus, the 3587-residue chain is Surfactin synthase subunit 1 (3587 aa).

Carrier domains are found at residues 971 to 1046 (APRN…DHRE), 2010 to 2085 (APRN…ASAE), and 3038 to 3112 (APTT…ERAE). 3 positions are modified to O-(pantetheine 4'-phosphoryl)serine: S1006, S2045, and S3073.

This sequence belongs to the ATP-dependent AMP-binding enzyme family. Pantetheine 4'-phosphate serves as cofactor.

Its pathway is antibiotic biosynthesis; surfactin biosynthesis. Its function is as follows. This protein is a multifunctional enzyme able to activate and polymerize the amino acids Leu, Glu, Asp and Val. Activation sites for these AA consist of individual domains. In Bacillus subtilis (strain 168), this protein is Surfactin synthase subunit 1 (srfAA).